Reading from the N-terminus, the 204-residue chain is MPSIISDPQAYDIMLRLLQFSCWSLSYINTVRTTLSDQLPSVSFMSICCDVAWEFVYAFVYPIASSHWAGGIRIWFAMHCVMLFIVAKYAPNDWDHVPLMKRFARLAYVAITIGFMAGHLALASEIGPALGFFWSGALCQITASLGSLCLLVCRGSTRGASIKTCPLCWFYIAITLTLDAIYPVFFFYFRAIEHPKKDSERKVE.

5 consecutive transmembrane segments (helical) span residues 44 to 64, 67 to 87, 103 to 122, 132 to 154, and 169 to 189; these read FMSI…YPIA, HWAG…FIVA, FARL…HLAL, FFWS…LVCR, and WFYI…FFYF.

The protein belongs to the paxB family.

The protein localises to the membrane. Its pathway is secondary metabolite biosynthesis; terpenoid biosynthesis. Terpene cyclase; part of the gene cluster that mediates the biosynthesis of terretonin, a fungal meroterpenoid that acts as a mycotoxin. The first step of the pathway is the synthesis of 3,5-dimethylorsellinic acid (DMOA) by the polyketide synthase trt4. DMOA is then prenylated into farnesyl-DMOA by the polyprenyl transferase trt2. Methylation by the methyltransferase trt5 then leads to farnesyl-DMOA methyl ester which is further subject to epoxidation by the FAD-dependent monooxygenase trt8 to yield epoxyfarnesyl-DMOA methyl ester. Cyclization of epoxyfarnesyl-DMOA methyl ester by the terpene cyclase trt1 leads to a tetracycle intermediate which is in turn converted to preterretonin. Dehydrogenase trt9 comes next to transform preterretonin to preterrenoid. The FAD-dependent monooxygenase trt3 is then required for the C-hydroxylation at C16 of preterrenoid to yield terrenoid. The cytochrome P450 trt6 catalyzes three successive oxidations to transform terrenoid into an unstable intermediate, which then undergoes the D-ring expansion and unusual rearrangement of the methoxy group to afford the core skeleton of terretonin. Trt14 catalyzes the D-ring expansion of terretonin involving intramolecular methoxy rearrangement as well as the hydrolysis of the expanded D-ring and the methyl ester moiety. Finally, the nonheme iron-dependent dioxygenase trt7 accomplishes the last two oxidation reactions steps to complete the biosynthesis of terretonin. Terretonin C is produced via spontaneous decarboxylation of the terretonin precursor. Another shunt product of the terretonin biosynthesis is dihydrofarnesyl-DMOA, derived from epoxyfarnesyl-DMOA through hydrolysis of the epoxide. The chain is Terpene cyclase trt1 from Aspergillus terreus (strain NIH 2624 / FGSC A1156).